A 123-amino-acid chain; its full sequence is MARIAGVDLPREKRVEVGLTYIYGIGLPTAQKILARTGVNPETRIRDLSEEEVNRLREVIDKEIKVEGDLRREVSLNIKRLMEIGCYRGLRHRRGLPVRGQRTKTNARTRKGPIKTVGAKRKK.

The tract at residues 95–123 (GLPVRGQRTKTNARTRKGPIKTVGAKRKK) is disordered.

Belongs to the universal ribosomal protein uS13 family. In terms of assembly, part of the 30S ribosomal subunit. Forms a loose heterodimer with protein S19. Forms two bridges to the 50S subunit in the 70S ribosome.

In terms of biological role, located at the top of the head of the 30S subunit, it contacts several helices of the 16S rRNA. In the 70S ribosome it contacts the 23S rRNA (bridge B1a) and protein L5 of the 50S subunit (bridge B1b), connecting the 2 subunits; these bridges are implicated in subunit movement. Contacts the tRNAs in the A and P-sites. In Desulfitobacterium hafniense (strain DSM 10664 / DCB-2), this protein is Small ribosomal subunit protein uS13.